The following is a 118-amino-acid chain: Small ribosomal subunit protein uS13 (118 aa).

Positions 94 to 118 (SLPLRGQRTKTNARTRKGPRKPIKR) are disordered.

Belongs to the universal ribosomal protein uS13 family. Part of the 30S ribosomal subunit. Forms a loose heterodimer with protein S19. Forms two bridges to the 50S subunit in the 70S ribosome.

Its function is as follows. Located at the top of the head of the 30S subunit, it contacts several helices of the 16S rRNA. In the 70S ribosome it contacts the 23S rRNA (bridge B1a) and protein L5 of the 50S subunit (bridge B1b), connecting the 2 subunits; these bridges are implicated in subunit movement. Contacts the tRNAs in the A and P-sites. The protein is Small ribosomal subunit protein uS13 of Pseudoalteromonas translucida (strain TAC 125).